The primary structure comprises 96 residues: Small ribosomal subunit protein bS6 (96 aa).

It belongs to the bacterial ribosomal protein bS6 family.

Binds together with bS18 to 16S ribosomal RNA. This chain is Small ribosomal subunit protein bS6, found in Carboxydothermus hydrogenoformans (strain ATCC BAA-161 / DSM 6008 / Z-2901).